A 330-amino-acid chain; its full sequence is Ferredoxin--NADP reductase 2 (330 aa).

Positions 37, 45, 50, 90, 124, 286, and 327 each coordinate FAD.

It belongs to the ferredoxin--NADP reductase type 2 family. In terms of assembly, homodimer. FAD serves as cofactor.

The enzyme catalyses 2 reduced [2Fe-2S]-[ferredoxin] + NADP(+) + H(+) = 2 oxidized [2Fe-2S]-[ferredoxin] + NADPH. In Shouchella clausii (strain KSM-K16) (Alkalihalobacillus clausii), this protein is Ferredoxin--NADP reductase 2.